Consider the following 400-residue polypeptide: MKFSQSLIALAACFLPLIAAAPEEAQHAKIRSPGAQDIILDSYIVVFNKGVNDADIESEFASVSHILSKRRPAHKGVGHKYNITGFKGYQIETDTGSIGEIAASPLVAWIERDGKVQANALETRSGATWGLGRISHKATGSNSYVYDSSAGSGSTVYVVDSGIYIEHSEFEGRAKWGANYISGSPDTDENGHGTHCAGTIAGATYGVASKANLVAVKVLDGDGSGSNSGVIAGINFVGQNGKDGKSVLSMSLGGSYSAALNSAVESTISNGVTVVVAAGNDGADASNYSPASAKNAITVGAVDSTDTRADFSNYGSVLDVFAPGVDVKSAWIGSKSASNTISGTSMATPHVAGLAAYLIGLGGLSSPAAVASKIASIGIQGSVKDPKGSVNLIAYNGNGA.

Residues 1–20 (MKFSQSLIALAACFLPLIAA) form the signal peptide. The propeptide occupies 21–119 (APEEAQHAKI…IERDGKVQAN (99 aa)). The Inhibitor I9 domain maps to 42-117 (SYIVVFNKGV…AWIERDGKVQ (76 aa)). The N-linked (GlcNAc...) asparagine glycan is linked to Asn-82. In terms of domain architecture, Peptidase S8 spans 128-400 (TWGLGRISHK…NLIAYNGNGA (273 aa)). Residues Asp-160, His-192, and Ser-345 each act as charge relay system in the active site.

The protein belongs to the peptidase S8 family.

Its subcellular location is the secreted. With respect to regulation, potently inhibited by the serine peptidase inhibitor chymostatin. Also inhibited by antpain and PMSF. Functionally, major secreted subtilisin-like serine endopeptidase. Preferentially cleaves substrates containing hydrophobic residues at P4, positively charged residues at P3, small or flexible residues at P2, and large, bulky residues at P1. Mediates the degradation of collagen, the major structural protein in the mammalian host. Degrades the nonhelical regions of collagen that function in the cross-linking of the helical components. May function as virulence factor involved in epidermal wing necrosis observed in white nose syndrome (WNS) in bats. In Pseudogymnoascus destructans (strain ATCC MYA-4855 / 20631-21) (Bat white-nose syndrome fungus), this protein is Subtilisin-like protease 2.